A 300-amino-acid polypeptide reads, in one-letter code: Glucose and ribitol dehydrogenase homolog (300 aa).

Residues 1–14 (MASQQFPPQNQETQ) show a composition bias toward polar residues. The tract at residues 1-23 (MASQQFPPQNQETQPGKEHAMDP) is disordered. Residue 44–68 (IVTGGDSGIGRAVCLCFALEGATVA) coordinates NAD(+). Ser-192 is a binding site for substrate. Tyr-205 (proton acceptor) is an active-site residue.

It belongs to the short-chain dehydrogenases/reductases (SDR) family.

In terms of biological role, may act as a short alcohol-polyol-sugar dehydrogenase possibly related to carbohydrate metabolism and the acquisition of desiccation tolerance. May also be involved in signal transduction. This Oryza sativa subsp. japonica (Rice) protein is Glucose and ribitol dehydrogenase homolog.